We begin with the raw amino-acid sequence, 471 residues long: Putative multidrug resistance protein MdtD (471 aa).

Topologically, residues 1 to 11 are periplasmic; the sequence is MTDLPDSTRWR. The helical transmembrane segment at 12-32 threads the bilayer; it reads LWIVAFGFFMQSLDTTIVNTA. Topologically, residues 33 to 48 are cytoplasmic; the sequence is LPSMAQSLGESPLHMH. A helical transmembrane segment spans residues 49-69; sequence MVIVSYVLTVAVMLPASGWLA. At 70–76 the chain is on the periplasmic side; the sequence is DKVGVRN. A helical membrane pass occupies residues 77–97; sequence IFFTAIVLFTLGSLFCALSGT. The Cytoplasmic portion of the chain corresponds to 98 to 101; that stretch reads LNEL. A helical transmembrane segment spans residues 102-124; that stretch reads LLARALQGVGGAMMVPVGRLTVM. Topologically, residues 125–137 are periplasmic; it reads KIVPREQYMAAMT. The helical transmembrane segment at 138–158 threads the bilayer; the sequence is FVTLPGQVGPLLGPALGGLLV. The Cytoplasmic portion of the chain corresponds to 159–164; that stretch reads EYASWH. Residues 165 to 185 form a helical membrane-spanning segment; that stretch reads WIFLINIPVGIIGAIATLMLM. Topologically, residues 186–196 are periplasmic; sequence PNYTMQTRRFD. The chain crosses the membrane as a helical span at residues 197-217; the sequence is LSGFLLLAVGMAVLTLALDGS. Residues 218–224 lie on the Cytoplasmic side of the membrane; sequence KGTGLSP. A helical transmembrane segment spans residues 225-245; that stretch reads LAIAGLVAVGVVALVLYLLHA. Residues 246 to 262 are Periplasmic-facing; it reads QNNNRALFSLKLFRTRT. The chain crosses the membrane as a helical span at residues 263–283; that stretch reads FSLGLAGSFAGRIGSGMLPFM. Residues 284-285 lie on the Cytoplasmic side of the membrane; that stretch reads TP. A helical transmembrane segment spans residues 286-306; the sequence is VFLQIGLGFSPFHAGLMMIPM. Topologically, residues 307–341 are periplasmic; it reads VLGSMGMKRIVVQVVNRFGYRRVLVATTLGLSLVT. A helical transmembrane segment spans residues 342-362; that stretch reads LLFMTTALLGWYYVLPFVLFL. Over 363–395 the chain is Cytoplasmic; that stretch reads QGMVNSTRFSSMNTLTLKDLPDNLASSGNSLLS. A helical membrane pass occupies residues 396–416; it reads MIMQLSMSIGVTIAGLLLGLF. Over 417-430 the chain is Periplasmic; it reads GSQHVSVDSGTTQT. The chain crosses the membrane as a helical span at residues 431 to 451; sequence VFMYTWLSMASIIALPAFIFA. Over 452-471 the chain is Cytoplasmic; the sequence is RVPNDTHQNVAISRRKRSAQ.

This sequence belongs to the major facilitator superfamily. TCR/Tet family.

Its subcellular location is the cell inner membrane. This chain is Putative multidrug resistance protein MdtD, found in Escherichia coli O6:K15:H31 (strain 536 / UPEC).